The following is a 349-amino-acid chain: MSTLDFNKIGKSYQSVRVLEGIDLQVTAGSRTAIVGPSGSGKTTLLRIIAGFETPDSGKVILQGNPLFDQSTHVPAHKRGIGFVPQDGALFPHFTAAGNIAYGLKGSKQDKARRIDKLMEMVALDRRLAQLWPHEISGGQQQRVALARALGQRPALMLLVEPFSTLDTALRASTRKAVAELLSQANIASILVTHDQSEALSFADQVAVMRAGKLVHVGAPQELYLRPIDEPTATFLGETLILSPNIEPGWPDCALGRVKVDDATRQGQTRIMLRPEQVTITPLPSAHHYPTHCLAKIVSIDFAGFISTLTLSIIEHNEIVAIKTISREGIHVGLMVDLTIMGQAHIFVE.

An ABC transporter domain is found at 4-236 (LDFNKIGKSY…PIDEPTATFL (233 aa)). 36-43 (GPSGSGKT) provides a ligand contact to ATP.

The protein belongs to the ABC transporter superfamily. Fe(3+) ion importer (TC 3.A.1.10) family. As to quaternary structure, the complex is composed of two ATP-binding proteins (FbpC), two transmembrane proteins (FbpB) and a solute-binding protein (FbpA).

The protein resides in the cell inner membrane. It catalyses the reaction Fe(3+)(out) + ATP + H2O = Fe(3+)(in) + ADP + phosphate + H(+). In terms of biological role, part of the ABC transporter complex FbpABC involved in Fe(3+) ions import. Responsible for energy coupling to the transport system. The protein is Fe(3+) ions import ATP-binding protein FbpC of Yersinia enterocolitica.